Consider the following 328-residue polypeptide: Embigin (328 aa).

The signal sequence occupies residues 1-33 (MRSHTGLRALVAPGCSLLLLYLLAATRPDRAVG). The Extracellular segment spans residues 34–264 (DPADSAFTSL…VLSFMVPLKP (231 aa)). N-linked (GlcNAc...) asparagine glycosylation is found at Asn55, Asn62, Asn75, Asn100, Asn117, Asn189, Asn196, Asn214, and Asn219. 2 consecutive Ig-like domains span residues 67-160 (EQTR…RVPK) and 159-254 (PKVH…IKLV). 2 disulfide bridges follow: Cys88/Cys144 and Cys180/Cys238. Residues 265 to 285 (FLAIIAEVILLVAIILLCEVY) form a helical membrane-spanning segment. Residues 286 to 328 (TQKKKNDPDDGKEFEQIEQLKSDDSNGIENNVPRYRKTDSGDQ) are Cytoplasmic-facing. Basic and acidic residues predominate over residues 289–309 (KKNDPDDGKEFEQIEQLKSDD). Positions 289–328 (KKNDPDDGKEFEQIEQLKSDDSNGIENNVPRYRKTDSGDQ) are disordered. Ser310 bears the Phosphoserine mark.

As to quaternary structure, interacts with SLC16A1, SLC16A6 and SLC16A7. In terms of processing, N-glycosylated. Detected in prostate, mammary gland and erythrocytes (at protein level). Detected in testis, brain, prostate, heart, kidney, liver, mammary gland and lung.

The protein localises to the cell membrane. It localises to the synapse. In terms of biological role, plays a role in the outgrowth of motoneurons and in the formation of neuromuscular junctions. Following muscle denervation, promotes nerve terminal sprouting and the formation of additional acetylcholine receptor clusters at synaptic sites without affecting terminal Schwann cell number or morphology. Delays the retraction of terminal sprouts following re-innervation of denervated endplates. Plays a role in targeting the monocarboxylate transporters SLC16A1, SLC16A6 and SLC16A7 to the cell membrane. This is Embigin (Emb) from Rattus norvegicus (Rat).